Here is a 383-residue protein sequence, read N- to C-terminus: ATP phosphoribosyltransferase regulatory subunit (383 aa).

Belongs to the class-II aminoacyl-tRNA synthetase family. HisZ subfamily. As to quaternary structure, heteromultimer composed of HisG and HisZ subunits.

The protein resides in the cytoplasm. It participates in amino-acid biosynthesis; L-histidine biosynthesis; L-histidine from 5-phospho-alpha-D-ribose 1-diphosphate: step 1/9. Required for the first step of histidine biosynthesis. May allow the feedback regulation of ATP phosphoribosyltransferase activity by histidine. In Neisseria meningitidis serogroup C / serotype 2a (strain ATCC 700532 / DSM 15464 / FAM18), this protein is ATP phosphoribosyltransferase regulatory subunit.